Here is a 337-residue protein sequence, read N- to C-terminus: Glyceraldehyde-3-phosphate dehydrogenase (337 aa).

NAD(+)-binding positions include 12-13 (RI), D36, R80, and S122. Residues 153–155 (SCT) and T184 contribute to the D-glyceraldehyde 3-phosphate site. Catalysis depends on C154, which acts as the Nucleophile. N185 provides a ligand contact to NAD(+). Residues R199, 212-213 (TG), and R235 contribute to the D-glyceraldehyde 3-phosphate site. Residue N318 participates in NAD(+) binding.

Belongs to the glyceraldehyde-3-phosphate dehydrogenase family. In terms of assembly, homotetramer.

Its subcellular location is the cytoplasm. It catalyses the reaction D-glyceraldehyde 3-phosphate + phosphate + NAD(+) = (2R)-3-phospho-glyceroyl phosphate + NADH + H(+). The protein operates within carbohydrate degradation; glycolysis; pyruvate from D-glyceraldehyde 3-phosphate: step 1/5. Functionally, catalyzes the oxidative phosphorylation of glyceraldehyde 3-phosphate (G3P) to 1,3-bisphosphoglycerate (BPG) using the cofactor NAD. The first reaction step involves the formation of a hemiacetal intermediate between G3P and a cysteine residue, and this hemiacetal intermediate is then oxidized to a thioester, with concomitant reduction of NAD to NADH. The reduced NADH is then exchanged with the second NAD, and the thioester is attacked by a nucleophilic inorganic phosphate to produce BPG. This is Glyceraldehyde-3-phosphate dehydrogenase (gap) from Zymomonas mobilis subsp. mobilis (strain ATCC 31821 / ZM4 / CP4).